A 483-amino-acid chain; its full sequence is UDP-N-acetylmuramoyl-L-alanyl-D-glutamate--2,6-diaminopimelate ligase (483 aa).

UDP-N-acetyl-alpha-D-muramoyl-L-alanyl-D-glutamate is bound at residue serine 30. An ATP-binding site is contributed by 109-115 (GTNGKTT). UDP-N-acetyl-alpha-D-muramoyl-L-alanyl-D-glutamate-binding positions include 151–152 (TT), serine 178, and arginine 186. At lysine 218 the chain carries N6-carboxylysine. Residues arginine 380, 403-406 (DNPR), glycine 453, and glutamate 457 each bind meso-2,6-diaminopimelate. Positions 403-406 (DNPR) match the Meso-diaminopimelate recognition motif motif.

This sequence belongs to the MurCDEF family. MurE subfamily. Mg(2+) is required as a cofactor. Post-translationally, carboxylation is probably crucial for Mg(2+) binding and, consequently, for the gamma-phosphate positioning of ATP.

The protein localises to the cytoplasm. It catalyses the reaction UDP-N-acetyl-alpha-D-muramoyl-L-alanyl-D-glutamate + meso-2,6-diaminopimelate + ATP = UDP-N-acetyl-alpha-D-muramoyl-L-alanyl-gamma-D-glutamyl-meso-2,6-diaminopimelate + ADP + phosphate + H(+). Its pathway is cell wall biogenesis; peptidoglycan biosynthesis. In terms of biological role, catalyzes the addition of meso-diaminopimelic acid to the nucleotide precursor UDP-N-acetylmuramoyl-L-alanyl-D-glutamate (UMAG) in the biosynthesis of bacterial cell-wall peptidoglycan. This Chlamydia pneumoniae (Chlamydophila pneumoniae) protein is UDP-N-acetylmuramoyl-L-alanyl-D-glutamate--2,6-diaminopimelate ligase.